Consider the following 355-residue polypeptide: Protein RecA (355 aa).

Residue G69 to T76 coordinates ATP. The segment at A329–V355 is disordered.

This sequence belongs to the RecA family.

It is found in the cytoplasm. Can catalyze the hydrolysis of ATP in the presence of single-stranded DNA, the ATP-dependent uptake of single-stranded DNA by duplex DNA, and the ATP-dependent hybridization of homologous single-stranded DNAs. It interacts with LexA causing its activation and leading to its autocatalytic cleavage. The protein is Protein RecA of Desulfotalea psychrophila (strain LSv54 / DSM 12343).